A 102-amino-acid polypeptide reads, in one-letter code: UPF0213 protein XCC3072 (102 aa).

Positions 5–80 constitute a GIY-YIG domain; that stretch reads KPWHLYLLLC…KQQPRARKLA (76 aa).

This sequence belongs to the UPF0213 family.

The polypeptide is UPF0213 protein XCC3072 (Xanthomonas campestris pv. campestris (strain ATCC 33913 / DSM 3586 / NCPPB 528 / LMG 568 / P 25)).